The primary structure comprises 414 residues: MMTNLMEQCKVLQNASKQLSSMNTKDKNEALRQVAISLQKNESFIIQENQKDVENAEAKGMKESLVDRLRLTKDRVEGMIKGIQTIIELKDPVWKSNEVWTLENGLTVSKMTVPIGVIGIIYESRPNVTVDAFCLTLKSGNGVLLRGSSTSIFSNRALVHAIKEGLKNSDVSEAVISLIDDPDRGLVKEMLTLNEYIDLIIPRGGKELIDFVVKNATVPTIETGVGNCHIFVDESANIDEAVDIIENAKVQRPGVCNACETVLIHEKIAKDLLPKVSGRIGKQVEIRGCQHTQSLIGGKLAIEDDWAEEFLDYIVAVKVVPNVDEAIEHINHFGTKHSEAILTENLSHANQFLRQVDAAAVYVNASTRFTDGSEFGFGGEMGISTQKIHARGPMGLNELVTVKYTIVGNGQIRK.

Belongs to the gamma-glutamyl phosphate reductase family.

It is found in the cytoplasm. It carries out the reaction L-glutamate 5-semialdehyde + phosphate + NADP(+) = L-glutamyl 5-phosphate + NADPH + H(+). The protein operates within amino-acid biosynthesis; L-proline biosynthesis; L-glutamate 5-semialdehyde from L-glutamate: step 2/2. Its function is as follows. Catalyzes the NADPH-dependent reduction of L-glutamate 5-phosphate into L-glutamate 5-semialdehyde and phosphate. The product spontaneously undergoes cyclization to form 1-pyrroline-5-carboxylate. In Alkaliphilus metalliredigens (strain QYMF), this protein is Gamma-glutamyl phosphate reductase.